A 149-amino-acid chain; its full sequence is Transcriptional repressor NrdR (149 aa).

A zinc finger spans residues Cys3–Cys34. An ATP-cone domain is found at Pro49–Glu139.

The protein belongs to the NrdR family. It depends on Zn(2+) as a cofactor.

Functionally, negatively regulates transcription of bacterial ribonucleotide reductase nrd genes and operons by binding to NrdR-boxes. The polypeptide is Transcriptional repressor NrdR (Idiomarina loihiensis (strain ATCC BAA-735 / DSM 15497 / L2-TR)).